Reading from the N-terminus, the 626-residue chain is DNA polymerase 2 (626 aa).

This sequence belongs to the DNA polymerase type-B family.

It catalyses the reaction DNA(n) + a 2'-deoxyribonucleoside 5'-triphosphate = DNA(n+1) + diphosphate. This polymerase is devoid of exonuclease activity. The protein is DNA polymerase 2 (dpo2) of Saccharolobus solfataricus (strain ATCC 35092 / DSM 1617 / JCM 11322 / P2) (Sulfolobus solfataricus).